Reading from the N-terminus, the 351-residue chain is DNA polymerase IV (351 aa).

Residues 4 to 185 enclose the UmuC domain; sequence IIHIDMDCFY…LPLRKIPGVG (182 aa). The Mg(2+) site is built by Asp-8 and Asp-103. Glu-104 is an active-site residue.

The protein belongs to the DNA polymerase type-Y family. In terms of assembly, monomer. It depends on Mg(2+) as a cofactor.

It localises to the cytoplasm. It carries out the reaction DNA(n) + a 2'-deoxyribonucleoside 5'-triphosphate = DNA(n+1) + diphosphate. Poorly processive, error-prone DNA polymerase involved in untargeted mutagenesis. Copies undamaged DNA at stalled replication forks, which arise in vivo from mismatched or misaligned primer ends. These misaligned primers can be extended by PolIV. Exhibits no 3'-5' exonuclease (proofreading) activity. May be involved in translesional synthesis, in conjunction with the beta clamp from PolIII. The chain is DNA polymerase IV from Photorhabdus laumondii subsp. laumondii (strain DSM 15139 / CIP 105565 / TT01) (Photorhabdus luminescens subsp. laumondii).